Consider the following 176-residue polypeptide: ATP-dependent protease subunit HslV (176 aa).

Residue T5 is part of the active site. A161, C164, and T167 together coordinate Na(+).

This sequence belongs to the peptidase T1B family. HslV subfamily. In terms of assembly, a double ring-shaped homohexamer of HslV is capped on each side by a ring-shaped HslU homohexamer. The assembly of the HslU/HslV complex is dependent on binding of ATP.

It is found in the cytoplasm. It catalyses the reaction ATP-dependent cleavage of peptide bonds with broad specificity.. Its activity is regulated as follows. Allosterically activated by HslU binding. Functionally, protease subunit of a proteasome-like degradation complex believed to be a general protein degrading machinery. The protein is ATP-dependent protease subunit HslV of Caldicellulosiruptor bescii (strain ATCC BAA-1888 / DSM 6725 / KCTC 15123 / Z-1320) (Anaerocellum thermophilum).